A 272-amino-acid polypeptide reads, in one-letter code: Putative MgpC-like protein MPN_366 (272 aa).

Disordered stretches follow at residues 65–84 (QESQ…TSGS) and 171–196 (GSGQ…PMPS). The segment covering 72 to 84 (NGSQSGSSDTSGS) has biased composition (low complexity). Residues 173–187 (GQESSWNSQRSQKGL) are compositionally biased toward polar residues.

Belongs to the MgpC family.

The polypeptide is Putative MgpC-like protein MPN_366 (Mycoplasma pneumoniae (strain ATCC 29342 / M129 / Subtype 1) (Mycoplasmoides pneumoniae)).